A 264-amino-acid polypeptide reads, in one-letter code: 3-methyl-2-oxobutanoate hydroxymethyltransferase (264 aa).

Residues aspartate 45 and aspartate 84 each contribute to the Mg(2+) site. 3-methyl-2-oxobutanoate contacts are provided by residues 45 to 46, aspartate 84, and lysine 112; that span reads DS. Glutamate 114 serves as a coordination point for Mg(2+). Glutamate 181 acts as the Proton acceptor in catalysis.

It belongs to the PanB family. In terms of assembly, homodecamer; pentamer of dimers. The cofactor is Mg(2+).

The protein localises to the cytoplasm. The enzyme catalyses 3-methyl-2-oxobutanoate + (6R)-5,10-methylene-5,6,7,8-tetrahydrofolate + H2O = 2-dehydropantoate + (6S)-5,6,7,8-tetrahydrofolate. It participates in cofactor biosynthesis; (R)-pantothenate biosynthesis; (R)-pantoate from 3-methyl-2-oxobutanoate: step 1/2. Its function is as follows. Catalyzes the reversible reaction in which hydroxymethyl group from 5,10-methylenetetrahydrofolate is transferred onto alpha-ketoisovalerate to form ketopantoate. This chain is 3-methyl-2-oxobutanoate hydroxymethyltransferase, found in Aeromonas hydrophila subsp. hydrophila (strain ATCC 7966 / DSM 30187 / BCRC 13018 / CCUG 14551 / JCM 1027 / KCTC 2358 / NCIMB 9240 / NCTC 8049).